A 101-amino-acid polypeptide reads, in one-letter code: Small ribosomal subunit protein uS14 (101 aa).

The interval 51-70 is disordered; the sequence is LPRDSSPSRQRNRCRQTGRP.

This sequence belongs to the universal ribosomal protein uS14 family. In terms of assembly, part of the 30S ribosomal subunit. Contacts proteins S3 and S10.

In terms of biological role, binds 16S rRNA, required for the assembly of 30S particles and may also be responsible for determining the conformation of the 16S rRNA at the A site. The sequence is that of Small ribosomal subunit protein uS14 from Salmonella arizonae (strain ATCC BAA-731 / CDC346-86 / RSK2980).